A 106-amino-acid polypeptide reads, in one-letter code: Small ribosomal subunit protein bS20 (106 aa).

Basic residues predominate over residues 1-20 (MATAKPKKKNPRLASGRKRV). A disordered region spans residues 1–21 (MATAKPKKKNPRLASGRKRVR).

It belongs to the bacterial ribosomal protein bS20 family.

Its function is as follows. Binds directly to 16S ribosomal RNA. This is Small ribosomal subunit protein bS20 from Polaromonas naphthalenivorans (strain CJ2).